A 248-amino-acid chain; its full sequence is Ubiquinone biosynthesis O-methyltransferase (248 aa).

Residues R40, G71, D92, and M135 each contribute to the S-adenosyl-L-methionine site.

This sequence belongs to the methyltransferase superfamily. UbiG/COQ3 family.

It carries out the reaction a 3-demethylubiquinol + S-adenosyl-L-methionine = a ubiquinol + S-adenosyl-L-homocysteine + H(+). The enzyme catalyses a 3-(all-trans-polyprenyl)benzene-1,2-diol + S-adenosyl-L-methionine = a 2-methoxy-6-(all-trans-polyprenyl)phenol + S-adenosyl-L-homocysteine + H(+). The protein operates within cofactor biosynthesis; ubiquinone biosynthesis. Its function is as follows. O-methyltransferase that catalyzes the 2 O-methylation steps in the ubiquinone biosynthetic pathway. The polypeptide is Ubiquinone biosynthesis O-methyltransferase (Roseobacter denitrificans (strain ATCC 33942 / OCh 114) (Erythrobacter sp. (strain OCh 114))).